The sequence spans 593 residues: MARSDDADSRAARWEKEAHDLSTQVAFLQEELALVRRKLTESPRHVRQLEERLAAAQAQLARLTENNERLVSTLKEARAQIVTLKEEIDRLAQPPSGYGIFLERHDDGTVDVFTGGRKLRVAVSPSLDVAELCRGQEVLLNDALNIVDAFGYERAGEVVMLKEVLAGPDGAPGDRALVVSHSDEERVVHLAETLIGAAIRAGDSLMIEPRSAYAYERIPKSEVEELVLEEVPDVDYTDIGGLHAQIEQIRDAVELPFLHADLFREHQLRPPKGILLYGPPGCGKTLIAKAVANSLAKKIAERRGEEKHTSYFLNIKGPELLNKYVGETERHIRLIFQRAREKAGEGTPVIVFFDEMDSVFRTRGSGVSSDVENTIVPQLLSEIDGVEGLENVIVIGASNREDMIDPAILRPGRLDVKIKIERPDAEAAKDIFSKYILSGLPLHPDDLAEHGGEPQATVAAMIDAVVLRMYSETEENRFLEVTYANGDKDVLYFKDFNSGAMIQNIVDRGKKMAIKEFLTSARKGLRLQHLLDACVDEFRENEDLPNTTNPDDWARISGKKGERIVYIRTLVSGGKGADAGRSIETASNTGQYL.

Residues 5-94 are a coiled coil; the sequence is DDADSRAARW…KEEIDRLAQP (90 aa). 281-286 contacts ATP; that stretch reads GCGKTL. The segment at 574–593 is disordered; that stretch reads GKGADAGRSIETASNTGQYL. Positions 584 to 593 are enriched in polar residues; sequence ETASNTGQYL. The interval 592-593 is docks into pockets in the proteasome alpha-ring; it reads YL.

Belongs to the AAA ATPase family. In terms of assembly, homohexamer. Assembles into a hexameric ring structure that caps the 20S proteasome core. Strongly interacts with the prokaryotic ubiquitin-like protein Pup through a hydrophobic interface; the interacting region of ARC lies in its N-terminal coiled-coil domain. There is one Pup binding site per ARC hexamer ring. Upon ATP-binding, the C-terminus of ARC interacts with the alpha-rings of the proteasome core, possibly by binding to the intersubunit pockets.

It participates in protein degradation; proteasomal Pup-dependent pathway. Functionally, ATPase which is responsible for recognizing, binding, unfolding and translocation of pupylated proteins into the bacterial 20S proteasome core particle. May be essential for opening the gate of the 20S proteasome via an interaction with its C-terminus, thereby allowing substrate entry and access to the site of proteolysis. Thus, the C-termini of the proteasomal ATPase may function like a 'key in a lock' to induce gate opening and therefore regulate proteolysis. This chain is Proteasome-associated ATPase, found in Salinispora arenicola (strain CNS-205).